A 273-amino-acid chain; its full sequence is HTH-type transcriptional regulator NimR (273 aa).

The HTH araC/xylS-type domain maps to 158 to 258; the sequence is PKIRTMVEMM…GQTPGRYIAR (101 aa). 2 DNA-binding regions (H-T-H motif) span residues 178-199 and 225-248; these read GQWA…VKET and VQKV…KKGL.

Functionally, negatively regulates expression of the nimT operon and its own expression. Acts by binding to the nimR-nimT intergenic region. The sequence is that of HTH-type transcriptional regulator NimR from Escherichia coli (strain K12).